Here is a 116-residue protein sequence, read N- to C-terminus: Thioredoxin (116 aa).

Positions 2-113 (TDSEKSATIK…LLRELSDVVP (112 aa)) constitute a Thioredoxin domain. A disulfide bridge links Cys37 with Cys40.

This sequence belongs to the thioredoxin family.

Functionally, participates in various redox reactions through the reversible oxidation of its active center dithiol to a disulfide and catalyzes dithiol-disulfide exchange reactions. This chain is Thioredoxin (trxA), found in Mycobacterium bovis (strain ATCC BAA-935 / AF2122/97).